The following is a 575-amino-acid chain: Adenine deaminase (575 aa).

The protein belongs to the metallo-dependent hydrolases superfamily. Adenine deaminase family. The cofactor is Mn(2+).

It carries out the reaction adenine + H2O + H(+) = hypoxanthine + NH4(+). The protein is Adenine deaminase of Nitratidesulfovibrio vulgaris (strain ATCC 29579 / DSM 644 / CCUG 34227 / NCIMB 8303 / VKM B-1760 / Hildenborough) (Desulfovibrio vulgaris).